An 829-amino-acid chain; its full sequence is MAPSQKRKAIDDDFILTISDNEEDIPLEEEQEVVPRKKAKTATQQSNKQKKKNNKKSKKQQQTEDDDDEAETKEDDAADLGIWGDNDEDDGAMDTEFQFVVDGQNEVDAEFDGWGFEGAHKGVVKGANAGGDKKAVDIDEIIRRRRERKAAKEGKTTATKEEEDKMEVDEEEDDIEEIDVDLDDDEDGVLADDAFGMGVGSDVEEEEEKQDAKMGGVDGEDEDSEGEDGEKKGEDEDEGDASDDDSVATAVEHPDDVQSSDDEEGIDEEEEAKMKEFFAPEEENQPKKKGEMSSFQEMSLSRPILRGLTSVGFTKPTPIQAKTIPISLMGKDVVGGAVTGSGKTAAFVVPILERLLYRPKKVPTTRVVILTPTRELAIQCHAVAVKLASHTDIKFCLAVGGLSLKVQEAELRLRPDVVIATPGRFIDHMRNSASFAVDTIEILVLDEADRMLEDGFADELNEILTTLPKSRQTMLFSATMTSSVDRLIRAGLNKPVRIMADSQKKTAGTLVQEFVRLRPGRESKREGYLLHICKTIYTERVIIFFRQKKIAHKMRIIFGLFGLSCAELHGSMNQAQRIQSVEDFRDGKVNFLLATDLASRGLDIKGVDTVINYEAPQTPEIYVHRVGRTARAGRSGTAITLAAEPDRKVVKAAVKAGKSQGAKISSRIIDPADADKWQAEIDELEDEIEEIMQEEKEEKQLQNMEMQVKKGENMIKYEDEISSRPKRTWFETQEDKKKAKAAGRAELNGVRDKLKSKNEGKLSNKDRKKLDTMQERKQERTYKKGSAERAGKGAVLNLKKVVKKVGRSAGPKKKGGNAGKGGKGKGRRK.

2 disordered regions span residues 1–96 (MAPS…MDTE) and 145–295 (RRER…MSSF). Over residues 20–32 (DNEEDIPLEEEQE) the composition is skewed to acidic residues. A compositionally biased stretch (basic residues) spans 48–59 (KQKKKNNKKSKK). Residues 63–78 (TEDDDDEAETKEDDAA) show a composition bias toward acidic residues. A compositionally biased stretch (basic and acidic residues) spans 150-163 (AAKEGKTTATKEEE). Composition is skewed to acidic residues over residues 164–190 (DKME…DGVL), 218–228 (DGEDEDSEGED), 235–246 (DEDEGDASDDDS), and 258–271 (QSSD…EEEE). Positions 272–291 (AKMKEFFAPEEENQPKKKGE) are enriched in basic and acidic residues. The Q motif signature appears at 293–321 (SSFQEMSLSRPILRGLTSVGFTKPTPIQA). In terms of domain architecture, Helicase ATP-binding spans 324–498 (IPISLMGKDV…RAGLNKPVRI (175 aa)). 337–344 (AVTGSGKT) lines the ATP pocket. Positions 446–449 (DEAD) match the DEAD box motif. Residues 528-707 (YLLHICKTIY…EKQLQNMEMQ (180 aa)) enclose the Helicase C-terminal domain. Residues 728-829 (TWFETQEDKK…KGGKGKGRRK (102 aa)) form a disordered region. A compositionally biased stretch (basic and acidic residues) spans 749–791 (GVRDKLKSKNEGKLSNKDRKKLDTMQERKQERTYKKGSAERAG). A compositionally biased stretch (basic residues) spans 800–815 (KVVKKVGRSAGPKKKG).

This sequence belongs to the DEAD box helicase family. DDX27/DRS1 subfamily. As to quaternary structure, associates with pre-ribosomal particles.

Its subcellular location is the nucleus. The protein localises to the nucleolus. The enzyme catalyses ATP + H2O = ADP + phosphate + H(+). In terms of biological role, ATP-binding RNA helicase involved in ribosome assembly. This is ATP-dependent RNA helicase drs1 (drh-11) from Neurospora crassa (strain ATCC 24698 / 74-OR23-1A / CBS 708.71 / DSM 1257 / FGSC 987).